We begin with the raw amino-acid sequence, 383 residues long: MASSAPAWVPYEPTRDCSQGLCSMYCPQWCYFIFPPPPPFDVAGTSADDSSGPVFSPLVIAIIGVLASAFLLVSYYTFISKYCGTVSSLRGRVFGSSSGGAAYGGGAGSGGRHGHGQSRSHESWNVSPPSGLDETLINKITVCKYRRGDGFVHTTDCSVCLGEFSDGESLRLLPRCSHAFHQQCIDTWLKSHSNCPLCRANITFVTVGLASPEPEGCAPGETGGDNTHEVVVVMDGLENLCEEQQEAVSRASTADDDHDAKDVAEGMEEANGAAEIREEGSPPKRGASSFDLHRDNRMCIADVLQESMEDELTAARESGLLAGGAGTSRRCHGENSKGRGGRSRRALQLQDAMEALPGKRLPSGGRSCFSSKSGRGKDSDHPM.

Residues 53–73 (PVFSPLVIAIIGVLASAFLLV) traverse the membrane as a helical segment. The tract at residues 105 to 129 (GGAGSGGRHGHGQSRSHESWNVSPP) is disordered. An RING-type; atypical zinc finger spans residues 157–199 (CSVCLGEFSDGESLRLLPRCSHAFHQQCIDTWLKSHSNCPLCR). Disordered stretches follow at residues 269 to 291 (EANG…SSFD) and 320 to 383 (LLAG…DHPM).

The protein localises to the membrane. The catalysed reaction is S-ubiquitinyl-[E2 ubiquitin-conjugating enzyme]-L-cysteine + [acceptor protein]-L-lysine = [E2 ubiquitin-conjugating enzyme]-L-cysteine + N(6)-ubiquitinyl-[acceptor protein]-L-lysine.. The protein operates within protein modification; protein ubiquitination. Its function is as follows. Possesses E3 ubiquitin-protein ligase in vitro. The chain is E3 ubiquitin-protein ligase Os04g0590900 from Oryza sativa subsp. japonica (Rice).